The following is a 146-amino-acid chain: Hemoglobin subunit beta-2 (146 aa).

Residues 2–146 form the Globin domain; it reads EWTDFERATI…VVSALGRQYH (145 aa). Positions 63 and 92 each coordinate heme b.

The protein belongs to the globin family. As to quaternary structure, hb3 is a heterotetramer of two alpha-2 chains and two beta-2 chains. As to expression, red blood cells.

Involved in oxygen transport from gills to the various peripheral tissues. In Anarhichas minor (Arctic spotted wolffish), this protein is Hemoglobin subunit beta-2 (hbb2).